The primary structure comprises 1220 residues: DNA-directed RNA polymerase subunit beta' (1220 aa).

Residues C60, C62, C75, and C78 each coordinate Zn(2+). Residues D449, D451, and D453 each contribute to the Mg(2+) site. The Zn(2+) site is built by C818, C892, C899, and C902.

The protein belongs to the RNA polymerase beta' chain family. As to quaternary structure, the RNAP catalytic core consists of 2 alpha, 1 beta, 1 beta' and 1 omega subunit. When a sigma factor is associated with the core the holoenzyme is formed, which can initiate transcription. Requires Mg(2+) as cofactor. The cofactor is Zn(2+).

The catalysed reaction is RNA(n) + a ribonucleoside 5'-triphosphate = RNA(n+1) + diphosphate. DNA-dependent RNA polymerase catalyzes the transcription of DNA into RNA using the four ribonucleoside triphosphates as substrates. This Lacticaseibacillus casei (strain BL23) (Lactobacillus casei) protein is DNA-directed RNA polymerase subunit beta'.